Consider the following 299-residue polypeptide: Pyridoxal 5'-phosphate synthase subunit PdxS (299 aa).

Aspartate 24 lines the D-ribose 5-phosphate pocket. Catalysis depends on lysine 81, which acts as the Schiff-base intermediate with D-ribose 5-phosphate. A D-ribose 5-phosphate-binding site is contributed by glycine 153. Residue arginine 165 coordinates D-glyceraldehyde 3-phosphate. D-ribose 5-phosphate contacts are provided by residues glycine 219 and 240 to 241; that span reads GS.

The protein belongs to the PdxS/SNZ family. In the presence of PdxT, forms a dodecamer of heterodimers.

The catalysed reaction is aldehydo-D-ribose 5-phosphate + D-glyceraldehyde 3-phosphate + L-glutamine = pyridoxal 5'-phosphate + L-glutamate + phosphate + 3 H2O + H(+). Its pathway is cofactor biosynthesis; pyridoxal 5'-phosphate biosynthesis. Its function is as follows. Catalyzes the formation of pyridoxal 5'-phosphate from ribose 5-phosphate (RBP), glyceraldehyde 3-phosphate (G3P) and ammonia. The ammonia is provided by the PdxT subunit. Can also use ribulose 5-phosphate and dihydroxyacetone phosphate as substrates, resulting from enzyme-catalyzed isomerization of RBP and G3P, respectively. The chain is Pyridoxal 5'-phosphate synthase subunit PdxS from Methanococcus maripaludis (strain C5 / ATCC BAA-1333).